A 227-amino-acid chain; its full sequence is Uracil-DNA glycosylase 2 (227 aa).

The active-site Proton acceptor is Asp-67.

Belongs to the uracil-DNA glycosylase (UDG) superfamily. UNG family.

It localises to the cytoplasm. It carries out the reaction Hydrolyzes single-stranded DNA or mismatched double-stranded DNA and polynucleotides, releasing free uracil.. In terms of biological role, excises uracil residues from the DNA which can arise as a result of misincorporation of dUMP residues by DNA polymerase or due to deamination of cytosine. This Streptomyces avermitilis (strain ATCC 31267 / DSM 46492 / JCM 5070 / NBRC 14893 / NCIMB 12804 / NRRL 8165 / MA-4680) protein is Uracil-DNA glycosylase 2 (ung2).